The following is a 200-amino-acid chain: Protein Syd (200 aa).

This sequence belongs to the Syd family.

The protein localises to the cell inner membrane. Its function is as follows. Interacts with the SecY protein in vivo. May bind preferentially to an uncomplexed state of SecY, thus functioning either as a chelating agent for excess SecY in the cell or as a regulatory factor that negatively controls the translocase function. This Colwellia psychrerythraea (strain 34H / ATCC BAA-681) (Vibrio psychroerythus) protein is Protein Syd.